A 144-amino-acid chain; its full sequence is D-aminoacyl-tRNA deacylase (144 aa).

The Gly-cisPro motif, important for rejection of L-amino acids signature appears at 137–138 (GP).

It belongs to the DTD family. As to quaternary structure, homodimer.

The protein resides in the cytoplasm. It carries out the reaction glycyl-tRNA(Ala) + H2O = tRNA(Ala) + glycine + H(+). The catalysed reaction is a D-aminoacyl-tRNA + H2O = a tRNA + a D-alpha-amino acid + H(+). Its function is as follows. An aminoacyl-tRNA editing enzyme that deacylates mischarged D-aminoacyl-tRNAs. Also deacylates mischarged glycyl-tRNA(Ala), protecting cells against glycine mischarging by AlaRS. Acts via tRNA-based rather than protein-based catalysis; rejects L-amino acids rather than detecting D-amino acids in the active site. By recycling D-aminoacyl-tRNA to D-amino acids and free tRNA molecules, this enzyme counteracts the toxicity associated with the formation of D-aminoacyl-tRNA entities in vivo and helps enforce protein L-homochirality. The chain is D-aminoacyl-tRNA deacylase from Acinetobacter baumannii (strain SDF).